Reading from the N-terminus, the 215-residue chain is Glycerol-3-phosphate acyltransferase (215 aa).

5 consecutive transmembrane segments (helical) span residues 1–21 (MAFLISALLILIGYLLGSIPT), 57–77 (IFVLTVDLAKAMLAVILVKLW), 85–105 (MIPLEWKSWLVVFAAIAAVLG), 126–146 (VLLVLNPIVALGTLGSFLAML), and 165–185 (VLMFGLHQPLPYCLFGVIVGL).

Belongs to the PlsY family. As to quaternary structure, probably interacts with PlsX.

The protein localises to the cell inner membrane. It carries out the reaction an acyl phosphate + sn-glycerol 3-phosphate = a 1-acyl-sn-glycero-3-phosphate + phosphate. The protein operates within lipid metabolism; phospholipid metabolism. Catalyzes the transfer of an acyl group from acyl-phosphate (acyl-PO(4)) to glycerol-3-phosphate (G3P) to form lysophosphatidic acid (LPA). This enzyme utilizes acyl-phosphate as fatty acyl donor, but not acyl-CoA or acyl-ACP. The sequence is that of Glycerol-3-phosphate acyltransferase from Crocosphaera subtropica (strain ATCC 51142 / BH68) (Cyanothece sp. (strain ATCC 51142)).